The primary structure comprises 101 residues: Small ribosomal subunit protein uS14 (101 aa).

The protein belongs to the universal ribosomal protein uS14 family. As to quaternary structure, part of the 30S ribosomal subunit. Contacts proteins S3 and S10.

Functionally, binds 16S rRNA, required for the assembly of 30S particles and may also be responsible for determining the conformation of the 16S rRNA at the A site. The chain is Small ribosomal subunit protein uS14 from Janthinobacterium sp. (strain Marseille) (Minibacterium massiliensis).